Consider the following 146-residue polypeptide: Deoxyuridine 5'-triphosphate nucleotidohydrolase (146 aa).

Residues 66–68 (RSG), N79, 83–85 (TID), and K93 each bind substrate.

This sequence belongs to the dUTPase family. Mg(2+) serves as cofactor.

It catalyses the reaction dUTP + H2O = dUMP + diphosphate + H(+). It functions in the pathway pyrimidine metabolism; dUMP biosynthesis; dUMP from dCTP (dUTP route): step 2/2. This enzyme is involved in nucleotide metabolism: it produces dUMP, the immediate precursor of thymidine nucleotides and it decreases the intracellular concentration of dUTP so that uracil cannot be incorporated into DNA. The protein is Deoxyuridine 5'-triphosphate nucleotidohydrolase of Zymomonas mobilis subsp. mobilis (strain ATCC 31821 / ZM4 / CP4).